We begin with the raw amino-acid sequence, 386 residues long: SET and MYND domain-containing protein DDB_G0273589 (386 aa).

Residues 6–294 (NGLELKSSEN…KGDQLTISYI (289 aa)) enclose the SET domain. The MYND-type zinc-finger motif lies at 51-94 (CFNCIKQLPSVIKLSLKCNQCNEIWYCNEQCKNENINKHQHYEC). A coiled-coil region spans residues 136-171 (NNKFIEQQLNNNNNNNNDNEQLTNTLDDVFDLVENQ).

Belongs to the class V-like SAM-binding methyltransferase superfamily.

Functionally, probable methyltransferase. The chain is SET and MYND domain-containing protein DDB_G0273589 from Dictyostelium discoideum (Social amoeba).